A 479-amino-acid polypeptide reads, in one-letter code: Glutamate--tRNA ligase 2 (479 aa).

The 'HIGH' region signature appears at proline 18–glycine 28. The short motif at lysine 244–arginine 248 is the 'KMSKS' region element. An ATP-binding site is contributed by lysine 247.

It belongs to the class-I aminoacyl-tRNA synthetase family. Glutamate--tRNA ligase type 1 subfamily. As to quaternary structure, monomer.

The protein resides in the cytoplasm. It carries out the reaction tRNA(Glu) + L-glutamate + ATP = L-glutamyl-tRNA(Glu) + AMP + diphosphate. Functionally, catalyzes the attachment of glutamate to tRNA(Glu) in a two-step reaction: glutamate is first activated by ATP to form Glu-AMP and then transferred to the acceptor end of tRNA(Glu). This is Glutamate--tRNA ligase 2 from Maricaulis maris (strain MCS10) (Caulobacter maris).